A 1058-amino-acid chain; its full sequence is Isoleucine--tRNA ligase (1058 aa).

The 'HIGH' region motif lies at 48–58 (PYTTGHIHLGT). The short motif at 596–600 (KMSKS) is the 'KMSKS' region element. Lys-599 serves as a coordination point for ATP.

Belongs to the class-I aminoacyl-tRNA synthetase family. IleS type 2 subfamily. Monomer. Zn(2+) serves as cofactor.

Its subcellular location is the cytoplasm. It catalyses the reaction tRNA(Ile) + L-isoleucine + ATP = L-isoleucyl-tRNA(Ile) + AMP + diphosphate. In terms of biological role, catalyzes the attachment of isoleucine to tRNA(Ile). As IleRS can inadvertently accommodate and process structurally similar amino acids such as valine, to avoid such errors it has two additional distinct tRNA(Ile)-dependent editing activities. One activity is designated as 'pretransfer' editing and involves the hydrolysis of activated Val-AMP. The other activity is designated 'posttransfer' editing and involves deacylation of mischarged Val-tRNA(Ile). The sequence is that of Isoleucine--tRNA ligase from Methanosarcina acetivorans (strain ATCC 35395 / DSM 2834 / JCM 12185 / C2A).